The primary structure comprises 198 residues: Na(+)-translocating NADH-quinone reductase subunit E (198 aa).

A run of 6 helical transmembrane segments spans residues 11–31, 35–55, 77–97, 110–130, 140–160, and 176–196; these read SVFI…FLAV, VSTS…AVPV, FLNF…LEMF, GIFL…SFMV, VVYG…LAGL, and LGIT…FSGI.

This sequence belongs to the NqrDE/RnfAE family. Composed of six subunits; NqrA, NqrB, NqrC, NqrD, NqrE and NqrF.

It is found in the cell inner membrane. It carries out the reaction a ubiquinone + n Na(+)(in) + NADH + H(+) = a ubiquinol + n Na(+)(out) + NAD(+). NQR complex catalyzes the reduction of ubiquinone-1 to ubiquinol by two successive reactions, coupled with the transport of Na(+) ions from the cytoplasm to the periplasm. NqrA to NqrE are probably involved in the second step, the conversion of ubisemiquinone to ubiquinol. This chain is Na(+)-translocating NADH-quinone reductase subunit E, found in Actinobacillus succinogenes (strain ATCC 55618 / DSM 22257 / CCUG 43843 / 130Z).